The primary structure comprises 156 residues: Ribosome maturation factor RimP (156 aa).

The protein belongs to the RimP family.

It localises to the cytoplasm. Its function is as follows. Required for maturation of 30S ribosomal subunits. The sequence is that of Ribosome maturation factor RimP from Bacillus thuringiensis (strain Al Hakam).